The primary structure comprises 349 residues: Sterol-4-alpha-carboxylate 3-dehydrogenase ERG26, decarboxylating (349 aa).

NADP(+) contacts are provided by residues 11-17 (GGSGFLG), 62-63 (DL), and 84-86 (CAS). Residues serine 124 and tyrosine 151 each coordinate substrate. NADP(+)-binding positions include tyrosine 151, lysine 155, and 179-182 (PAGI). The active-site Proton donor is the lysine 155.

This sequence belongs to the 3-beta-HSD family. Heterotetramer of ERG25, ERG26, ERG27 and ERG28. ERG28 acts as a scaffold to tether ERG27 and other 4,4-demethylation-related enzymes, forming a demethylation enzyme complex, in the endoplasmic reticulum.

The protein resides in the endoplasmic reticulum membrane. It catalyses the reaction 4beta-methylzymosterol-4alpha-carboxylate + NADP(+) = 3-dehydro-4-methylzymosterol + CO2 + NADPH. Its pathway is steroid biosynthesis; zymosterol biosynthesis; zymosterol from lanosterol: step 4/6. Its activity is regulated as follows. Inhibited by FR171456, a natural product with broad antifungal activity. Its function is as follows. Sterol-4-alpha-carboxylate 3-dehydrogenase; part of the third module of ergosterol biosynthesis pathway that includes the late steps of the pathway. ERG26 is a catalytic component of the C-4 demethylation complex that catalyzes the oxidative decarboxylation that results in a reduction of the 3-beta-hydroxy group at the C-3 carbon to an oxo group. The third module or late pathway involves the ergosterol synthesis itself through consecutive reactions that mainly occur in the endoplasmic reticulum (ER) membrane. Firstly, the squalene synthase ERG9 catalyzes the condensation of 2 farnesyl pyrophosphate moieties to form squalene, which is the precursor of all steroids. Squalene synthase is crucial for balancing the incorporation of farnesyl diphosphate (FPP) into sterol and nonsterol isoprene synthesis. Secondly, the squalene epoxidase ERG1 catalyzes the stereospecific oxidation of squalene to (S)-2,3-epoxysqualene, which is considered to be a rate-limiting enzyme in steroid biosynthesis. Then, the lanosterol synthase ERG7 catalyzes the cyclization of (S)-2,3 oxidosqualene to lanosterol, a reaction that forms the sterol core. In the next steps, lanosterol is transformed to zymosterol through a complex process involving various demethylation, reduction and desaturation reactions. The lanosterol 14-alpha-demethylase ERG11 (also known as CYP51) catalyzes C14-demethylation of lanosterol to produce 4,4'-dimethyl cholesta-8,14,24-triene-3-beta-ol, which is critical for ergosterol biosynthesis. The C-14 reductase ERG24 reduces the C14=C15 double bond of 4,4-dimethyl-cholesta-8,14,24-trienol to produce 4,4-dimethyl-cholesta-8,24-dienol. 4,4-dimethyl-cholesta-8,24-dienol is substrate of the C-4 demethylation complex ERG25-ERG26-ERG27 in which ERG25 catalyzes the three-step monooxygenation required for the demethylation of 4,4-dimethyl and 4alpha-methylsterols, ERG26 catalyzes the oxidative decarboxylation that results in a reduction of the 3-beta-hydroxy group at the C-3 carbon to an oxo group, and ERG27 is responsible for the reduction of the keto group on the C-3. ERG28 has a role as a scaffold to help anchor ERG25, ERG26 and ERG27 to the endoplasmic reticulum and ERG29 regulates the activity of the iron-containing C4-methylsterol oxidase ERG25. Then, the sterol 24-C-methyltransferase ERG6 catalyzes the methyl transfer from S-adenosyl-methionine to the C-24 of zymosterol to form fecosterol. The C-8 sterol isomerase ERG2 catalyzes the reaction which results in unsaturation at C-7 in the B ring of sterols and thus converts fecosterol to episterol. The sterol-C5-desaturase ERG3 then catalyzes the introduction of a C-5 double bond in the B ring to produce 5-dehydroepisterol. The C-22 sterol desaturase ERG5 further converts 5-dehydroepisterol into ergosta-5,7,22,24(28)-tetraen-3beta-ol by forming the C-22(23) double bond in the sterol side chain. Finally, ergosta-5,7,22,24(28)-tetraen-3beta-ol is substrate of the C-24(28) sterol reductase ERG4 to produce ergosterol. This is Sterol-4-alpha-carboxylate 3-dehydrogenase ERG26, decarboxylating from Saccharomyces cerevisiae (strain ATCC 204508 / S288c) (Baker's yeast).